The primary structure comprises 108 residues: CDGSH iron-sulfur domain-containing protein 1 (108 aa).

The chain crosses the membrane as a helical; Signal-anchor for type III membrane protein span at residues 13–31 (WIAAVTFAAGTAALGYLAY). At 32 to 108 (KKFYAKESRT…GPLIIKKKET (77 aa)) the chain is on the cytoplasmic side. K42 participates in a covalent cross-link: Glycyl lysine isopeptide (Lys-Gly) (interchain with G-Cter in ubiquitin). The active-site Schiff-base intermediate with pyridoxal 5'-phosphate is the K55. Residues K55 and K68 each carry the N6-acetyllysine; alternate modification. Residues K55 and K68 each participate in a glycyl lysine isopeptide (Lys-Gly) (interchain with G-Cter in ubiquitin); alternate cross-link. [2Fe-2S] cluster contacts are provided by C72 and C74. Residues K78 and K79 each participate in a glycyl lysine isopeptide (Lys-Gly) (interchain with G-Cter in ubiquitin) cross-link. C83 and H87 together coordinate [2Fe-2S] cluster. A Glycyl lysine isopeptide (Lys-Gly) (interchain with G-Cter in ubiquitin) cross-link involves residue K89. N6-acetyllysine; alternate is present on K104. K104 participates in a covalent cross-link: Glycyl lysine isopeptide (Lys-Gly) (interchain with G-Cter in ubiquitin); alternate. Residues K105 and K106 each participate in a glycyl lysine isopeptide (Lys-Gly) (interchain with G-Cter in ubiquitin) cross-link.

The protein belongs to the CISD protein family. As to quaternary structure, homodimer. Requires [2Fe-2S] cluster as cofactor. The cofactor is pyridoxal 5'-phosphate. Post-translationally, ubiquitinated by PRKN during mitophagy, leading to its degradation and enhancement of mitophagy. Deubiquitinated by USP30.

The protein localises to the mitochondrion outer membrane. It catalyses the reaction L-cysteine + 2-oxoglutarate = 2-oxo-3-sulfanylpropanoate + L-glutamate. Its function is as follows. L-cysteine transaminase that catalyzes the reversible transfer of the amino group from L-cysteine to the alpha-keto acid 2-oxoglutarate to respectively form 2-oxo-3-sulfanylpropanoate and L-glutamate. The catalytic cycle occurs in the presence of pyridoxal 5'-phosphate (PLP) cofactor that facilitates transamination by initially forming an internal aldimine with the epsilon-amino group of active site Lys-55 residue on the enzyme (PLP-enzyme aldimine), subsequently displaced by formation of an external aldimine with the substrate amino group (PLP-L-cysteine aldimine). The external aldimine is further deprotonated to form a carbanion intermediate, which in the presence of 2-oxoglutarate regenerates PLP yielding final products 2-oxo-3-sulfanylpropanoate and L-glutamate. The proton transfer in carbanion intermediate is suggested to be controlled by the active site lysine residue, whereas PLP stabilizes carbanion structure through electron delocalization, also known as the electron sink effect. Plays a key role in regulating maximal capacity for electron transport and oxidative phosphorylation. May be involved in iron-sulfur cluster shuttling and/or in redox reactions. Can transfer the [2Fe-2S] cluster to an apo-acceptor protein only when in the oxidation state, likely serving as a redox sensor that regulates mitochondrial iron-sulfur cluster assembly and iron trafficking upon oxidative stress. In Rattus norvegicus (Rat), this protein is CDGSH iron-sulfur domain-containing protein 1 (Cisd1).